We begin with the raw amino-acid sequence, 257 residues long: 5'-nucleotidase SurE (257 aa).

Positions 13, 14, 44, and 100 each coordinate a divalent metal cation.

Belongs to the SurE nucleotidase family. A divalent metal cation serves as cofactor.

It localises to the cytoplasm. The catalysed reaction is a ribonucleoside 5'-phosphate + H2O = a ribonucleoside + phosphate. In terms of biological role, nucleotidase that shows phosphatase activity on nucleoside 5'-monophosphates. This Phocaeicola vulgatus (strain ATCC 8482 / DSM 1447 / JCM 5826 / CCUG 4940 / NBRC 14291 / NCTC 11154) (Bacteroides vulgatus) protein is 5'-nucleotidase SurE.